Reading from the N-terminus, the 526-residue chain is Bifunctional purine biosynthesis protein PurH (526 aa).

The MGS-like domain maps to 1 to 147 (MSVIKRALIS…KNWKHVAIVT (147 aa)).

The protein belongs to the PurH family.

It carries out the reaction (6R)-10-formyltetrahydrofolate + 5-amino-1-(5-phospho-beta-D-ribosyl)imidazole-4-carboxamide = 5-formamido-1-(5-phospho-D-ribosyl)imidazole-4-carboxamide + (6S)-5,6,7,8-tetrahydrofolate. The enzyme catalyses IMP + H2O = 5-formamido-1-(5-phospho-D-ribosyl)imidazole-4-carboxamide. Its pathway is purine metabolism; IMP biosynthesis via de novo pathway; 5-formamido-1-(5-phospho-D-ribosyl)imidazole-4-carboxamide from 5-amino-1-(5-phospho-D-ribosyl)imidazole-4-carboxamide (10-formyl THF route): step 1/1. It participates in purine metabolism; IMP biosynthesis via de novo pathway; IMP from 5-formamido-1-(5-phospho-D-ribosyl)imidazole-4-carboxamide: step 1/1. The polypeptide is Bifunctional purine biosynthesis protein PurH (Neisseria gonorrhoeae (strain NCCP11945)).